We begin with the raw amino-acid sequence, 143 residues long: Ponticulin (143 aa).

The first 22 residues, 1–22, serve as a signal peptide directing secretion; sequence MLVLRNLLALVTLALLFTLSSA. The N-linked (GlcNAc...) asparagine glycan is linked to N111. S118 is lipidated: GPI-like-anchor amidated serine. Residues 119–143 constitute a propeptide, removed in mature form; that stretch reads SSGSTVMIGLASSLLFAFATLLALF.

It belongs to the ponticulin family. Monomer. Post-translationally, disulfide bond(s) stabilize the native, actin-binding conformation of ponticulin. The GPI-like-anchor contains a phosphoceramide group, rather than a phosphatidyl group.

The protein resides in the cell membrane. Functionally, binds F-actin and nucleates actin assembly. Major high affinity link between the plasma membrane and the cortical actin network. This is Ponticulin (ponA) from Dictyostelium discoideum (Social amoeba).